We begin with the raw amino-acid sequence, 116 residues long: Aspartate 1-decarboxylase (116 aa).

The active-site Schiff-base intermediate with substrate; via pyruvic acid is S25. S25 is subject to Pyruvic acid (Ser). T57 is a substrate binding site. Y58 serves as the catalytic Proton donor. 73 to 75 contacts substrate; the sequence is GAA.

The protein belongs to the PanD family. In terms of assembly, heterooctamer of four alpha and four beta subunits. Pyruvate serves as cofactor. Is synthesized initially as an inactive proenzyme, which is activated by self-cleavage at a specific serine bond to produce a beta-subunit with a hydroxyl group at its C-terminus and an alpha-subunit with a pyruvoyl group at its N-terminus.

Its subcellular location is the cytoplasm. The enzyme catalyses L-aspartate + H(+) = beta-alanine + CO2. It functions in the pathway cofactor biosynthesis; (R)-pantothenate biosynthesis; beta-alanine from L-aspartate: step 1/1. Functionally, catalyzes the pyruvoyl-dependent decarboxylation of aspartate to produce beta-alanine. This is Aspartate 1-decarboxylase from Syntrophus aciditrophicus (strain SB).